The following is a 399-amino-acid chain: MQAGVSVPHYQGMAGELQPLPVLIITSVALLVTGVVMISSASMDMAAATLGNSYHYVIRQILFAGLGCATALVAVNVPVSWWERSGWLLLGIGLLVLVLVLTPLGRTVNGSTRWIPMGLFNVQVSEVAKLCLIAYLAGYVVRRREELLHTWPGFLKPLGVLGVASVLLVIQPDFGATVVLVTAAAGMIFLSGVRLSRFMPLIGVLAALGTILVVTQPYRLKRVISYLDPWKDQFDSGYQLTQSLIAFGRGEWVGVGLGNSVQKLFFLPEAHTDFIYAIIAEEFGLLGALVVLGLFAALVVSGLVIARRAEKAGMAFGACFSYGITLLIGLQAGINMAVSTGLLPTKGLTLPLVSYGGSSLMVTCIGIAVIARVELERQDRARVASETKGNRTKGGAVYD.

9 consecutive transmembrane segments (helical) span residues proline 19–serine 39, isoleucine 61–tryptophan 81, serine 85–glycine 105, tryptophan 114–alanine 134, valine 160–leucine 180, phenylalanine 198–tyrosine 218, leucine 285–isoleucine 305, methionine 314–isoleucine 334, and leucine 350–isoleucine 370.

This sequence belongs to the SEDS family. FtsW subfamily.

It is found in the cell inner membrane. It carries out the reaction [GlcNAc-(1-&gt;4)-Mur2Ac(oyl-L-Ala-gamma-D-Glu-L-Lys-D-Ala-D-Ala)](n)-di-trans,octa-cis-undecaprenyl diphosphate + beta-D-GlcNAc-(1-&gt;4)-Mur2Ac(oyl-L-Ala-gamma-D-Glu-L-Lys-D-Ala-D-Ala)-di-trans,octa-cis-undecaprenyl diphosphate = [GlcNAc-(1-&gt;4)-Mur2Ac(oyl-L-Ala-gamma-D-Glu-L-Lys-D-Ala-D-Ala)](n+1)-di-trans,octa-cis-undecaprenyl diphosphate + di-trans,octa-cis-undecaprenyl diphosphate + H(+). It functions in the pathway cell wall biogenesis; peptidoglycan biosynthesis. Functionally, peptidoglycan polymerase that is essential for cell division. The chain is Probable peptidoglycan glycosyltransferase FtsW from Marinobacter nauticus (strain ATCC 700491 / DSM 11845 / VT8) (Marinobacter aquaeolei).